Here is a 315-residue protein sequence, read N- to C-terminus: Secreted frizzled-related protein 3 (315 aa).

A signal peptide spans 1–21 (MWRGLPALALAALLLLGRAPA). One can recognise an FZ domain in the interval 22 to 142 (GRAAACEPVR…LYDRGVCISP (121 aa)). Intrachain disulfides connect cysteine 27–cysteine 88, cysteine 35–cysteine 81, cysteine 72–cysteine 111, cysteine 100–cysteine 139, and cysteine 104–cysteine 128. The N-linked (GlcNAc...) asparagine glycan is linked to asparagine 41. Residues 170 to 290 (CKCKPIKATQ…WDQKLRHLGK (121 aa)) form the NTR domain. The tract at residues 284 to 315 (KLRHLGKGKGEPGQSDSALKTGKPGNARQTRS) is disordered.

Belongs to the secreted frizzled-related protein (sFRP) family.

Its subcellular location is the secreted. In terms of biological role, soluble frizzled-related proteins (sFRPS) function as modulators of Wnt signaling through direct interaction with Wnts. They have a role in regulating cell growth and differentiation in specific cell types. SFRP3/FRZB appears to be involved in limb skeletogenesis. Antagonist of Wnt8 signaling. Regulates chondrocyte maturation and long bone development. This Gallus gallus (Chicken) protein is Secreted frizzled-related protein 3 (FRZB).